A 44-amino-acid polypeptide reads, in one-letter code: M-factor (44 aa).

A propeptide spanning residues 1–32 (MDSIATNTHSSSIVNAYNNNPTDVVKTQNIKN) is cleaved from the precursor. At Cys-41 the chain carries Cysteine methyl ester. A lipid anchor (S-farnesyl cysteine) is attached at Cys-41. The propeptide at 42 to 44 (VIA) is removed in mature form.

Its subcellular location is the secreted. M-factor is a mating pheromone produced by M-type mating cells. All three mfm genes contribute to the production of M-factor. This is M-factor (mfm2) from Schizosaccharomyces pombe (strain 972 / ATCC 24843) (Fission yeast).